The following is a 361-amino-acid chain: Serpentine receptor class X 45 (361 aa).

7 helical membrane passes run 20–40, 58–78, 92–112, 133–153, 176–196, 242–262, and 278–298; these read LLIF…AFYI, AAGD…VLFF, FAQL…VISL, TTFL…FLVI, MINV…MFAI, LLYV…PVPL, and LLTT…TLIF. N-linked (GlcNAc...) asparagine glycosylation occurs at Asn317.

This sequence belongs to the G-protein coupled receptor 1 family.

It is found in the cell membrane. The protein is Serpentine receptor class X 45 (srx-45) of Caenorhabditis elegans.